We begin with the raw amino-acid sequence, 420 residues long: Vacuolar amino acid transporter 5 (420 aa).

The Cytoplasmic segment spans residues 1–19 (MSGYSPLSSGPADVHIGKA). Residues 20-40 (GFFSSVINLANTILGAGILSL) form a helical membrane-spanning segment. The Vacuolar segment spans residues 41-49 (PNAFTKTGL). A helical transmembrane segment spans residues 50–70 (LFGCLTIVFSAFASFLGLYFV). Residues 71–96 (SQCAARLPRGKASFAAVAKHTFPSLA) lie on the Cytoplasmic side of the membrane. Residues 97–117 (VVFDASIAVKCFGVAVSYLVI) traverse the membrane as a helical segment. Over 118–141 (VGDLMPQIAPSLGLSSPMFLRRQT) the chain is Vacuolar. A helical membrane pass occupies residues 142-162 (WIVFALFVLTPLSFLKRLDSL). At 163 to 166 (RHTS) the chain is on the cytoplasmic side. The helical transmembrane segment at 167-187 (VISLIALCYLVFIVLYHFIIG) threads the bilayer. At 188-195 (DTVKGEIR) the chain is on the vacuolar side. A helical membrane pass occupies residues 196 to 216 (YFVPESGFGYLSVLPVFVFGF). Residues 217-240 (TCHQNAFSVINEVRNFSQGFVNFT) are Cytoplasmic-facing. A helical transmembrane segment spans residues 241–261 (MFTAIISSTLLYLLVAITGYL). Residues 262–278 (SFGSLASGNIIAMYDNT) are Vacuolar-facing. A helical membrane pass occupies residues 279-299 (SIWIIGGKLAIVVLVLFSYPL). At 300 to 326 (QCHPCRNSVYQAIRRSYSAHDMSDGYH) the chain is on the cytoplasmic side. Residues 327–347 (AVITLCILLFTHSLALLLSSL) form a helical membrane-spanning segment. Residues 348–349 (EM) are Vacuolar-facing. A helical membrane pass occupies residues 350–370 (VLAFVGSTGSTFISFILPGSL). At 371-394 (YYFFSHKVASPGNSSPLQLRISRA) the chain is on the cytoplasmic side. A helical transmembrane segment spans residues 395–415 (FAAGLAIYGTVVMILCLNINI). The Vacuolar segment spans residues 416-420 (AKLSH).

Belongs to the amino acid/polyamine transporter 2 family.

It localises to the vacuole membrane. Functionally, vacuolar amino acid transporter involved in the vacuolar uptake of histidine, glutamate, tyrosine, arginine, lysine, and serine. Required for sporulation. The polypeptide is Vacuolar amino acid transporter 5 (avt5) (Schizosaccharomyces pombe (strain 972 / ATCC 24843) (Fission yeast)).